The following is a 268-amino-acid chain: Tropinone reductase homolog At2g29150 (268 aa).

An NADP(+)-binding site is contributed by 22–46 (LVTGGSKGLGEAVVEELAMLGARVH). A substrate-binding site is contributed by Ser-155. Tyr-167 functions as the Proton acceptor in the catalytic mechanism.

Belongs to the short-chain dehydrogenases/reductases (SDR) family. SDR65C subfamily.

Functionally, enantiospecific reductase active on cyclic monoterpenes and small flexible lipophilic carbonyls. No activity with tropinone, nitrogen-containing tropinone analogs, tropine or pseudotropine as substrate. The chain is Tropinone reductase homolog At2g29150 from Arabidopsis thaliana (Mouse-ear cress).